The following is an 886-amino-acid chain: DNA double-strand break repair Rad50 ATPase (886 aa).

ATP-binding positions include Arg13, 33 to 39 (NGAGKSS), and Gln128. Coiled coils occupy residues 183-360 (EQIK…LLET) and 400-433 (KEIT…LKSA). The 98-residue stretch at 392-489 (LSKAKEEEKE…RLEKVEKALE (98 aa)) folds into the Zinc-hook domain. 2 residues coordinate Zn(2+): Cys437 and Cys440. 2 coiled-coil regions span residues 489–518 (EKQE…DAEK) and 545–713 (SSAS…KKVE). Residue 792-797 (FLSGGE) coordinates ATP.

The protein belongs to the SMC family. RAD50 subfamily. As to quaternary structure, homodimer. Forms a heterotetramer composed of two Mre11 subunits and two Rad50 subunits. The cofactor is Zn(2+).

Its function is as follows. Part of the Rad50/Mre11 complex, which is involved in the early steps of DNA double-strand break (DSB) repair. The complex may facilitate opening of the processed DNA ends to aid in the recruitment of HerA and NurA. Rad50 controls the balance between DNA end bridging and DNA resection via ATP-dependent structural rearrangements of the Rad50/Mre11 complex. The sequence is that of DNA double-strand break repair Rad50 ATPase from Archaeoglobus fulgidus (strain ATCC 49558 / DSM 4304 / JCM 9628 / NBRC 100126 / VC-16).